A 501-amino-acid polypeptide reads, in one-letter code: Bifunctional purine biosynthesis protein PurH (501 aa).

One can recognise an MGS-like domain in the interval 1 to 144 (MKKRALISVF…KNFKDVVVLS (144 aa)).

This sequence belongs to the PurH family.

It catalyses the reaction (6R)-10-formyltetrahydrofolate + 5-amino-1-(5-phospho-beta-D-ribosyl)imidazole-4-carboxamide = 5-formamido-1-(5-phospho-D-ribosyl)imidazole-4-carboxamide + (6S)-5,6,7,8-tetrahydrofolate. The enzyme catalyses IMP + H2O = 5-formamido-1-(5-phospho-D-ribosyl)imidazole-4-carboxamide. It functions in the pathway purine metabolism; IMP biosynthesis via de novo pathway; 5-formamido-1-(5-phospho-D-ribosyl)imidazole-4-carboxamide from 5-amino-1-(5-phospho-D-ribosyl)imidazole-4-carboxamide (10-formyl THF route): step 1/1. It participates in purine metabolism; IMP biosynthesis via de novo pathway; IMP from 5-formamido-1-(5-phospho-D-ribosyl)imidazole-4-carboxamide: step 1/1. This chain is Bifunctional purine biosynthesis protein PurH, found in Clostridium perfringens (strain ATCC 13124 / DSM 756 / JCM 1290 / NCIMB 6125 / NCTC 8237 / Type A).